The primary structure comprises 330 residues: Protein RecA (330 aa).

66-73 is an ATP binding site; sequence GPESSGKT.

This sequence belongs to the RecA family.

Its subcellular location is the cytoplasm. Functionally, can catalyze the hydrolysis of ATP in the presence of single-stranded DNA, the ATP-dependent uptake of single-stranded DNA by duplex DNA, and the ATP-dependent hybridization of homologous single-stranded DNAs. It interacts with LexA causing its activation and leading to its autocatalytic cleavage. The chain is Protein RecA from Bacteroides thetaiotaomicron (strain ATCC 29148 / DSM 2079 / JCM 5827 / CCUG 10774 / NCTC 10582 / VPI-5482 / E50).